Here is a 172-residue protein sequence, read N- to C-terminus: NADH-ubiquinone oxidoreductase chain 6 (172 aa).

Helical transmembrane passes span 1–21 (MAFY…AIAS), 24–44 (APYF…GILV), 53–73 (LILF…SAAL), 86–106 (VVFW…GFLL), and 140–160 (GKML…VLEV).

Belongs to the complex I subunit 6 family. In terms of assembly, core subunit of respiratory chain NADH dehydrogenase (Complex I) which is composed of 45 different subunits.

It is found in the mitochondrion inner membrane. It catalyses the reaction a ubiquinone + NADH + 5 H(+)(in) = a ubiquinol + NAD(+) + 4 H(+)(out). Its function is as follows. Core subunit of the mitochondrial membrane respiratory chain NADH dehydrogenase (Complex I) which catalyzes electron transfer from NADH through the respiratory chain, using ubiquinone as an electron acceptor. Essential for the catalytic activity and assembly of complex I. This is NADH-ubiquinone oxidoreductase chain 6 (mt-nd6) from Danio rerio (Zebrafish).